The chain runs to 401 residues: Inactive (1R,4R,5S)-(-)-guaia-6,10(14)-diene synthase (401 aa).

A disordered region spans residues 1 to 20 (MVKFDSGSESEMTNGDELHI). Residues D134 and E139 each coordinate Mg(2+). The short motif at 134-138 (DDQFD) is the DDXXD motif element. A substrate-binding site is contributed by R242. S292 contributes to the Mg(2+) binding site. Residue K295 participates in substrate binding. D296 provides a ligand contact to Mg(2+). A substrate-binding site is contributed by 375–376 (RY).

This sequence belongs to the terpene synthase family. Requires Mg(2+) as cofactor.

The protein is Inactive (1R,4R,5S)-(-)-guaia-6,10(14)-diene synthase of Gibberella fujikuroi (strain CBS 195.34 / IMI 58289 / NRRL A-6831) (Bakanae and foot rot disease fungus).